The primary structure comprises 285 residues: MVRIALPNKGRVYEPIMSLFEGAGLHVIEHSQRSLFAKTVDENITMLFARSRDIPGYVENGAADLGITGEDFIQEAGADVEVLLDLGMGKAELVLAVPEASAIERPEQLAGKKVATEFPEITKKYFATRGISVHVVEVCGATEITPHIGVADAIVDLTSTGTSLSMNRLKIIGRVLRTSQRLIASKASLAQDGRKISEITLALQSVIEARGKRYLMMNVPEGALEAVKKKLPGLAGPTVLKVEADSPMCAVHAVVPENEIYRVINDLKEVGARDILIVPIERIVR.

Belongs to the ATP phosphoribosyltransferase family. Long subfamily. It depends on Mg(2+) as a cofactor.

The protein localises to the cytoplasm. It catalyses the reaction 1-(5-phospho-beta-D-ribosyl)-ATP + diphosphate = 5-phospho-alpha-D-ribose 1-diphosphate + ATP. Its pathway is amino-acid biosynthesis; L-histidine biosynthesis; L-histidine from 5-phospho-alpha-D-ribose 1-diphosphate: step 1/9. With respect to regulation, feedback inhibited by histidine. In terms of biological role, catalyzes the condensation of ATP and 5-phosphoribose 1-diphosphate to form N'-(5'-phosphoribosyl)-ATP (PR-ATP). Has a crucial role in the pathway because the rate of histidine biosynthesis seems to be controlled primarily by regulation of HisG enzymatic activity. The polypeptide is ATP phosphoribosyltransferase (Methanocella arvoryzae (strain DSM 22066 / NBRC 105507 / MRE50)).